A 529-amino-acid chain; its full sequence is UDP-glycosyltransferase (529 aa).

N-linked (GlcNAc...) asparagine glycosylation is found at Asn70 and Asn420. The helical transmembrane segment at 504–524 threads the bilayer; it reads LDLYLVYIALFAVPVGAVRWI.

This sequence belongs to the glycosyltransferase 28 family.

The protein localises to the membrane. The catalysed reaction is stromemycin aglycone + UDP-alpha-D-glucose = stromemycin + UDP + H(+). It functions in the pathway mycotoxin biosynthesis. UDP-glycosyltransferase; part of the gene cluster that mediates the biosynthesis of stromemycin, a depside C-glucoside with two unsaturated C9 side chains belonging to aromatic polyketide glycosides. Acts as the tailoring enzyme responsible for 3-C-glucosylation of bininalkenylresorcylic acid to yield stromemycin. This is UDP-glycosyltransferase from Talaromyces amestolkiae.